Reading from the N-terminus, the 571-residue chain is Pectinesterase/pectinesterase inhibitor (571 aa).

A pectinesterase inhibitor region spans residues 27–178 (NSHQKAVESL…KILSSNAIDI (152 aa)). The interval 233–254 (AQAGRPGAPADEGIGEGGGGGG) is disordered. The segment at 259-558 (THVVAKDGSG…TVANWLTPAN (300 aa)) is pectinesterase. Residues threonine 336 and glutamine 366 each coordinate substrate. Aspartate 389 (proton donor; for pectinesterase activity) is an active-site residue. The Nucleophile; for pectinesterase activity role is filled by aspartate 410. Substrate is bound by residues arginine 479 and tryptophan 481.

The protein in the N-terminal section; belongs to the PMEI family. This sequence in the C-terminal section; belongs to the pectinesterase family.

The protein localises to the secreted. Its subcellular location is the cell wall. The enzyme catalyses [(1-&gt;4)-alpha-D-galacturonosyl methyl ester](n) + n H2O = [(1-&gt;4)-alpha-D-galacturonosyl](n) + n methanol + n H(+). The protein operates within glycan metabolism; pectin degradation; 2-dehydro-3-deoxy-D-gluconate from pectin: step 1/5. In terms of biological role, acts in the modification of cell walls via demethylesterification of cell wall pectin. The chain is Pectinesterase/pectinesterase inhibitor from Brassica campestris (Field mustard).